Consider the following 136-residue polypeptide: Large ribosomal subunit protein uL22 (136 aa).

It belongs to the universal ribosomal protein uL22 family. Part of the 50S ribosomal subunit.

This protein binds specifically to 23S rRNA; its binding is stimulated by other ribosomal proteins, e.g. L4, L17, and L20. It is important during the early stages of 50S assembly. It makes multiple contacts with different domains of the 23S rRNA in the assembled 50S subunit and ribosome. Its function is as follows. The globular domain of the protein is located near the polypeptide exit tunnel on the outside of the subunit, while an extended beta-hairpin is found that lines the wall of the exit tunnel in the center of the 70S ribosome. The sequence is that of Large ribosomal subunit protein uL22 from Bacteroides thetaiotaomicron (strain ATCC 29148 / DSM 2079 / JCM 5827 / CCUG 10774 / NCTC 10582 / VPI-5482 / E50).